We begin with the raw amino-acid sequence, 699 residues long: Lutropin-choriogonadotropic hormone receptor (699 aa).

The first 26 residues, 1–26 (MKQRFSALQLLKLLLLLQPPLPRALR), serve as a signal peptide directing secretion. The region spanning 27–66 (EALCPEPCNCVPDGALRCPGPTAGLTRLSLAYLPVKVIPS) is the LRRNT domain. Topologically, residues 27 to 363 (EALCPEPCNC…EDIMGYDFLR (337 aa)) are extracellular. 3 LRR repeats span residues 96–115 (NLLN…RYIE), 124–145 (RLKY…TKVF), and 149–171 (SNFI…AFQG). The N-linked (GlcNAc...) asparagine glycan is linked to Asn-99. N-linked (GlcNAc...) asparagine glycans are attached at residues Asn-174 and Asn-195. LRR repeat units lie at residues 175–196 (ESVT…AFNG), 198–220 (TLTS…AFRG), and 223–244 (GPKT…GLES). Asn-291, Asn-299, and Asn-313 each carry an N-linked (GlcNAc...) asparagine glycan. Tyr-331 carries the sulfotyrosine modification. Residues 364–385 (VLIWLINILAIMGNMTVLFVLL) traverse the membrane as a helical segment. Residues 386–395 (TSRYKLTVPR) are Cytoplasmic-facing. The chain crosses the membrane as a helical span at residues 396 to 416 (FLMCNLSFADFCMGLYLLLIA). Topologically, residues 417-439 (SVDSQTKGQYYNHAIDWQTGSGC) are extracellular. Cys-439 and Cys-514 are disulfide-bonded. A helical membrane pass occupies residues 440–462 (STAGFFTVFASELSVYTLTVITL). The Cytoplasmic portion of the chain corresponds to 463–482 (ERWHTITYAIHLDQKLRLRH). The chain crosses the membrane as a helical span at residues 483–505 (AILIMLGGWLFSSLIAMLPLVGV). Residues 506–525 (SNYMKVSICFPMDVETTLSQ) lie on the Extracellular side of the membrane. A helical transmembrane segment spans residues 526 to 549 (VYILTILILNVVAFFIICACYIKI). The Cytoplasmic segment spans residues 550–570 (YFAVRNPELMATNKDTKIAKK). Residues 571–594 (MAILIFTDFTCMAPISFFAISAAF) traverse the membrane as a helical segment. Residues 595-605 (KVPLITVTNSK) lie on the Extracellular side of the membrane. Residues 606-627 (VLLVLFYPINSCANPFLYAIFT) traverse the membrane as a helical segment. Over 628–699 (KTFQRDFFLL…LLDKTRYTEC (72 aa)) the chain is Cytoplasmic. Residues Cys-643 and Cys-644 are each lipidated (S-palmitoyl cysteine).

Belongs to the G-protein coupled receptor 1 family. FSH/LSH/TSH subfamily. Sulfated. Gonadal and thyroid cells.

It is found in the cell membrane. Receptor for lutropin-choriogonadotropic hormone. The activity of this receptor is mediated by G proteins which activate adenylate cyclase. The chain is Lutropin-choriogonadotropic hormone receptor (LHCGR) from Homo sapiens (Human).